Here is a 449-residue protein sequence, read N- to C-terminus: CBL-interacting protein kinase 31 (449 aa).

The region spanning tyrosine 20–phenylalanine 275 is the Protein kinase domain. ATP is bound by residues isoleucine 26 to valine 34 and lysine 49. Aspartate 143 acts as the Proton acceptor in catalysis. The interval aspartate 161–glutamate 190 is activation loop. The region spanning aspartate 313–glutamate 337 is the NAF domain.

It belongs to the protein kinase superfamily. CAMK Ser/Thr protein kinase family. SNF1 subfamily. May interact with CBL3. Requires Mn(2+) as cofactor. In terms of processing, autophosphorylated. In terms of tissue distribution, highly expressed in leaf blade and leaf sheath, but not in other tissues.

It carries out the reaction L-seryl-[protein] + ATP = O-phospho-L-seryl-[protein] + ADP + H(+). The catalysed reaction is L-threonyl-[protein] + ATP = O-phospho-L-threonyl-[protein] + ADP + H(+). Its function is as follows. Involved in cold stress tolerance. CIPK serine-threonine protein kinases interact with CBL proteins. Binding of a CBL protein to the regulatory NAF domain of CIPK protein lead to the activation of the kinase in a calcium-dependent manner. The chain is CBL-interacting protein kinase 31 (CIPK31) from Oryza sativa subsp. japonica (Rice).